Consider the following 35-residue polypeptide: Photosystem II reaction center protein M (35 aa).

The chain crosses the membrane as a helical span at residues 5–25; the sequence is ILAFIATALFILVPTAFLLII.

This sequence belongs to the PsbM family. As to quaternary structure, PSII is composed of 1 copy each of membrane proteins PsbA, PsbB, PsbC, PsbD, PsbE, PsbF, PsbH, PsbI, PsbJ, PsbK, PsbL, PsbM, PsbT, PsbX, PsbY, PsbZ, Psb30/Ycf12, at least 3 peripheral proteins of the oxygen-evolving complex and a large number of cofactors. It forms dimeric complexes.

It localises to the plastid. Its subcellular location is the chloroplast thylakoid membrane. Functionally, one of the components of the core complex of photosystem II (PSII). PSII is a light-driven water:plastoquinone oxidoreductase that uses light energy to abstract electrons from H(2)O, generating O(2) and a proton gradient subsequently used for ATP formation. It consists of a core antenna complex that captures photons, and an electron transfer chain that converts photonic excitation into a charge separation. This subunit is found at the monomer-monomer interface. The sequence is that of Photosystem II reaction center protein M from Amborella trichopoda.